We begin with the raw amino-acid sequence, 78 residues long: Large ribosomal subunit protein bL28 (78 aa).

This sequence belongs to the bacterial ribosomal protein bL28 family.

The sequence is that of Large ribosomal subunit protein bL28 from Azoarcus sp. (strain BH72).